Reading from the N-terminus, the 713-residue chain is Leucine-rich repeat neuronal protein 2 (713 aa).

A signal peptide spans 1 to 18 (MRLLVAPLLLAWVAGATA). Residues 19–630 (AVPVVPWHVP…CHRALGDRPG (612 aa)) lie on the Extracellular side of the membrane. The 50-residue stretch at 20-69 (VPVVPWHVPCPPQCACQIRPWYTPRSSYREATTVDCNDLFLTAVPPALPA) folds into the LRRNT domain. LRR repeat units lie at residues 70-91 (GTQTLLLQSNSIVRVDQSELGY), 94-115 (NLTELDLSQNSFSDARDCDFHA), 118-139 (QLLSLHLEENQLTRLEDHSFAG), 142-163 (SLQELYLNHNQLYRIAPRAFSG), 166-187 (NLLRLHLNSNLLRAIDSRWFEM), 190-211 (NLEILMIGGNKVDAILDMNFRP), 214-235 (NLRSLVLAGMNLREISDYALEG), 238-259 (SLESLSFYDNQLARVPRRALEQ), 262-283 (GLKFLDLNKNPLQRVGPGDFAN), 286-305 (HLKELGLNNMEELVSIDKFA), 311-333 (ELTKLDITNNPRLSFIHPRAFHH), and 336-357 (QMETLMLNNNALSALHQQTVES). Asn-94 is a glycosylation site (N-linked (GlcNAc...) asparagine). The 54-residue stretch at 369–422 (NPIRCDCVIRWANATGTRVRFIEPQSTLCAEPPDLQRLPVREVPFREMTDHCLP) folds into the LRRCT domain. N-linked (GlcNAc...) asparagine glycosylation occurs at Asn-381. The Ig-like C2-type domain maps to 422–511 (PLISPRSFPP…LVGADTKTVS (90 aa)). Residues Cys-445 and Cys-497 are joined by a disulfide bond. Residues Asn-555 and Asn-583 are each glycosylated (N-linked (GlcNAc...) asparagine). A helical membrane pass occupies residues 631–651 (LIAILALAVLLLAAGLAAHLG). At 652 to 713 (TGQPRKGVGG…TLLPPLSQNS (62 aa)) the chain is on the cytoplasmic side.

As to expression, overamplified in malignant gliomas.

Its subcellular location is the membrane. This is Leucine-rich repeat neuronal protein 2 (LRRN2) from Homo sapiens (Human).